The primary structure comprises 122 residues: Large ribosomal subunit protein uL22 (122 aa).

The protein belongs to the universal ribosomal protein uL22 family. As to quaternary structure, part of the 50S ribosomal subunit.

This protein binds specifically to 23S rRNA; its binding is stimulated by other ribosomal proteins, e.g. L4, L17, and L20. It is important during the early stages of 50S assembly. It makes multiple contacts with different domains of the 23S rRNA in the assembled 50S subunit and ribosome. Its function is as follows. The globular domain of the protein is located near the polypeptide exit tunnel on the outside of the subunit, while an extended beta-hairpin is found that lines the wall of the exit tunnel in the center of the 70S ribosome. This chain is Large ribosomal subunit protein uL22, found in Caldicellulosiruptor saccharolyticus (strain ATCC 43494 / DSM 8903 / Tp8T 6331).